Consider the following 465-residue polypeptide: MPNDLLKEYKNAWDKYDDKQLKEVFALGDRFKNFISNCKTERECVTELIKTAEKSGYRNIEDILAKGETLKEGDKVYANNRGKGLIMFLIGKEPLYTGFKILGAHIDSPRLDLKQNPLYEDTDLAMLETHYYGGIKKYQWVTLPLAIHGVIVKKDGTIVNVCVGEDDNDPVFGVSDILVHLASEQLEKKASKVIEGEDLNILIGSIPLKDGEEKQKVKHNIMKILNEKYDISEEDFVSAELEIVPAGKARDYGFDRSMVMGYGQDDRICAYTSFEAMLEMKNAKKTCITILVDKEEVGSIGATGMQSKFFENTVADIMSLCGDYDELKLRKALYNSEMLSSDVSAAFDPNYPNVMEKRNSAYLGKGIVFNKYTGSRGKSGCNDANPEYIAELRRILSKESVNWQTAELGKVDQGGGGTIAYILAEYGMQVIDCGVALLNMHAPWEISSKADIYETKNGYSAFLNN.

The Zn(2+) site is built by His105, His180, and His441.

This sequence belongs to the peptidase M18 family. Zn(2+) serves as cofactor.

This chain is Probable M18 family aminopeptidase 1 (apeA), found in Clostridium acetobutylicum (strain ATCC 824 / DSM 792 / JCM 1419 / IAM 19013 / LMG 5710 / NBRC 13948 / NRRL B-527 / VKM B-1787 / 2291 / W).